The chain runs to 241 residues: ATP synthase subunit a (241 aa).

Helical transmembrane passes span Gly-30 to Gly-50, Phe-91 to Trp-111, Ile-128 to Ser-148, Leu-193 to Leu-213, and Gly-214 to Gly-234.

The protein belongs to the ATPase A chain family. As to quaternary structure, F-type ATPases have 2 components, CF(1) - the catalytic core - and CF(0) - the membrane proton channel. CF(1) has five subunits: alpha(3), beta(3), gamma(1), delta(1), epsilon(1). CF(0) has four main subunits: a, b, b' and c.

It is found in the cellular thylakoid membrane. In terms of biological role, key component of the proton channel; it plays a direct role in the translocation of protons across the membrane. The protein is ATP synthase subunit a of Prochlorococcus marinus (strain MIT 9215).